The chain runs to 204 residues: Pro-hevein (204 aa).

An N-terminal signal peptide occupies residues 1–17 (MNIFIVVLLCLTGVAIA). The Chitin-binding type-1 domain occupies 18–60 (EQCGRQAGGKLCPNNLCCSQWGWCGSTDEYCSPDHNCQSNCKD). 4 disulfides stabilise this stretch: Cys20/Cys35, Cys29/Cys41, Cys34/Cys48, and Cys54/Cys58. Residues 61–66 (SGEGVG) constitute a propeptide that is removed on maturation. Positions 68 to 189 (GSASNVLATY…VNYQFVDCGD (122 aa)) constitute a Barwin domain. Intrachain disulfides connect Cys96–Cys128, Cys117–Cys151, and Cys131–Cys187.

In terms of processing, proteolytically processed to yield the two chains of the mature protein. Laticifer.

Functionally, N-acetyl-D-glucosamine / N-acetyl-D-neuraminic acid binding lectin. Can inhibit fungal growth. The chain is Pro-hevein (HEV1) from Hevea brasiliensis (Para rubber tree).